The primary structure comprises 212 residues: Phosphoribosylglycinamide formyltransferase (212 aa).

Residue 11–13 (GSN) participates in N(1)-(5-phospho-beta-D-ribosyl)glycinamide binding. (6R)-10-formyltetrahydrofolate contacts are provided by residues arginine 64, 89–92 (MRIL), and asparagine 106. The Proton donor role is filled by histidine 108. (6R)-10-formyltetrahydrofolate is bound at residue 140–144 (TDELD). N(1)-(5-phospho-beta-D-ribosyl)glycinamide is bound at residue 170–173 (QTQE).

The protein belongs to the GART family. In terms of assembly, monomer. Homodimer below pH 6.8.

It catalyses the reaction N(1)-(5-phospho-beta-D-ribosyl)glycinamide + (6R)-10-formyltetrahydrofolate = N(2)-formyl-N(1)-(5-phospho-beta-D-ribosyl)glycinamide + (6S)-5,6,7,8-tetrahydrofolate + H(+). Its pathway is purine metabolism; IMP biosynthesis via de novo pathway; N(2)-formyl-N(1)-(5-phospho-D-ribosyl)glycinamide from N(1)-(5-phospho-D-ribosyl)glycinamide (10-formyl THF route): step 1/1. Its activity is regulated as follows. Inhibited by N10-(bromoacetyl)-5,8-dideazafolate. Its function is as follows. Catalyzes the transfer of a formyl group from 10-formyltetrahydrofolate to 5-phospho-ribosyl-glycinamide (GAR), producing 5-phospho-ribosyl-N-formylglycinamide (FGAR) and tetrahydrofolate. This is Phosphoribosylglycinamide formyltransferase from Escherichia coli (strain K12).